The sequence spans 410 residues: LL-diaminopimelate aminotransferase (410 aa).

Y15 and G42 together coordinate substrate. Pyridoxal 5'-phosphate contacts are provided by residues Y72, 108-109, Y132, N187, Y218, and 246-248; these read SK and SFS. Positions 109, 132, and 187 each coordinate substrate. Residue K249 is modified to N6-(pyridoxal phosphate)lysine. Residues R257 and N292 each coordinate pyridoxal 5'-phosphate. The substrate site is built by N292 and R388.

The protein belongs to the class-I pyridoxal-phosphate-dependent aminotransferase family. LL-diaminopimelate aminotransferase subfamily. As to quaternary structure, homodimer. Pyridoxal 5'-phosphate is required as a cofactor.

It catalyses the reaction (2S,6S)-2,6-diaminopimelate + 2-oxoglutarate = (S)-2,3,4,5-tetrahydrodipicolinate + L-glutamate + H2O + H(+). The protein operates within amino-acid biosynthesis; L-lysine biosynthesis via DAP pathway; LL-2,6-diaminopimelate from (S)-tetrahydrodipicolinate (aminotransferase route): step 1/1. Functionally, involved in the synthesis of meso-diaminopimelate (m-DAP or DL-DAP), required for both lysine and peptidoglycan biosynthesis. Catalyzes the direct conversion of tetrahydrodipicolinate to LL-diaminopimelate. The chain is LL-diaminopimelate aminotransferase from Geotalea uraniireducens (strain Rf4) (Geobacter uraniireducens).